We begin with the raw amino-acid sequence, 568 residues long: Sentrin-specific protease 3 (568 aa).

Residues 1-119 are disordered; that stretch reads MKETIQGTGS…PSHRKTCSQR (119 aa). Ser52, Ser71, and Ser73 each carry phosphoserine. A compositionally biased stretch (acidic residues) spans 72 to 87; sequence ASEEEEEEEEEDEEEV. The segment covering 106 to 119 has biased composition (basic residues); that stretch reads RALRPSHRKTCSQR. 2 short sequence motifs (nuclear localization signal) span residues 119-122 and 147-153; these read RRRR and RHRGRRR. The interval 155–174 is disordered; that stretch reads LAHPKNHLSPQEGGATPQVP. At Ser163 the chain carries Phosphoserine. Residue Thr170 is modified to Phosphothreonine. A phosphoserine mark is found at Ser175, Ser182, Ser206, and Ser226. Positions 380 to 537 are protease; that stretch reads HVLTMDDLGT…AFVLQYCKHL (158 aa). Active-site residues include His459 and Asp476. Residue Cys526 is the Nucleophile of the active site.

It belongs to the peptidase C48 family. Component of some MLL1/MLL complex, at least composed of the core components KMT2A/MLL1, ASH2L, HCFC1/HCF1, WDR5 and RBBP5, as well as the facultative components BACC1, CHD8, E2F6, HSP70, INO80C, KANSL1, LAS1L, MAX, MCRS1, MGA, MYST1/MOF, PELP1, PHF20, PRP31, RING2, RUVB1/TIP49A, RUVB2/TIP49B, SENP3, TAF1, TAF4, TAF6, TAF7, TAF9 and TEX10. Interacts with EP300, NPM1 and CDCA8. Component of the 5FMC complex, at least composed of PELP1, LAS1L, TEX10, WDR18 and SENP3; the complex interacts with methylated CHTOP and ZNF148. Interacts with NOL9. Interacts with CCAR2.

The protein localises to the nucleus. It localises to the nucleolus. It is found in the nucleoplasm. The protein resides in the cytoplasm. On oxidative stress, SENP3 degradation is blocked by inhibition of its ubiquitination, which stabilizes it as it accumulates in the nucleoplasm. Functionally, protease that releases SUMO2 and SUMO3 monomers from sumoylated substrates, but has only weak activity against SUMO1 conjugates. Deconjugates SUMO2 from MEF2D, which increases its transcriptional activation capability. Deconjugates SUMO2 and SUMO3 from CDCA8. Redox sensor that, when redistributed into nucleoplasm, can act as an effector to enhance HIF1A transcriptional activity by desumoylating EP300. Required for rRNA processing through deconjugation of SUMO2 and SUMO3 from nucleophosmin, NPM1. Plays a role in the regulation of sumoylation status of ZNF148. Functions as a component of the Five Friends of Methylated CHTOP (5FMC) complex; the 5FMC complex is recruited to ZNF148 by methylated CHTOP, leading to desumoylation of ZNF148 and subsequent transactivation of ZNF148 target genes. Deconjugates SUMO2 from KAT5. Catalyzes desumoylation of MRE11. The sequence is that of Sentrin-specific protease 3 (Senp3) from Mus musculus (Mouse).